The primary structure comprises 135 residues: ATP synthase epsilon chain (135 aa).

Belongs to the ATPase epsilon chain family. As to quaternary structure, F-type ATPases have 2 components, CF(1) - the catalytic core - and CF(0) - the membrane proton channel. CF(1) has five subunits: alpha(3), beta(3), gamma(1), delta(1), epsilon(1). CF(0) has three main subunits: a, b and c.

It localises to the cell inner membrane. In terms of biological role, produces ATP from ADP in the presence of a proton gradient across the membrane. The polypeptide is ATP synthase epsilon chain (Nitrobacter winogradskyi (strain ATCC 25391 / DSM 10237 / CIP 104748 / NCIMB 11846 / Nb-255)).